Here is a 270-residue protein sequence, read N- to C-terminus: Probable inositol 1-monophosphatase ImpA (270 aa).

Glutamate 69, aspartate 85, isoleucine 87, and aspartate 88 together coordinate Mg(2+). Residue glutamate 69 participates in substrate binding. Substrate contacts are provided by residues isoleucine 87–threonine 90, arginine 187, and aspartate 216. Aspartate 216 provides a ligand contact to Mg(2+).

The protein belongs to the inositol monophosphatase superfamily. Requires Mg(2+) as cofactor.

It catalyses the reaction a myo-inositol phosphate + H2O = myo-inositol + phosphate. The protein operates within polyol metabolism; myo-inositol biosynthesis; myo-inositol from D-glucose 6-phosphate: step 2/2. Its function is as follows. Catalyzes the dephosphorylation of inositol 1-phosphate (I-1-P) to yield free myo-inositol, a key metabolite in mycobacteria. This chain is Probable inositol 1-monophosphatase ImpA (impA), found in Mycobacterium tuberculosis (strain ATCC 25618 / H37Rv).